Consider the following 208-residue polypeptide: Type 4 adapter protein LvgA (208 aa).

In terms of assembly, the T4BSS is a complex nanomachine composed of several subcomplexes. This subunit is part of the Type IV Coupling Complex (T4CC), a subcomplex composed of the DotLMNYZ core and the IcmSW-LvgA adapter subunits, linked by the C-terminal tail of DotL. Interacts with DotL, IcmS and IcmW. Interacts with various effector proteins, including VpdB, SetA, PieA and SidH.

Its subcellular location is the cytoplasm. In terms of biological role, component of the Dot/Icm type IVB secretion system (T4BSS), which is used to inject bacterial effector proteins into eukaryotic host cells. Part of a subcomplex which recruits effector proteins and delivers them to the core transmembrane subcomplex. Is a critical subunit for binding a subset of effector proteins. Recognizes more than one type of binding motif. May be a critical factor that confers host specificity. This Legionella pneumophila subsp. pneumophila (strain Philadelphia 1 / ATCC 33152 / DSM 7513) protein is Type 4 adapter protein LvgA.